Here is a 337-residue protein sequence, read N- to C-terminus: RAD51-associated protein 1 (337 aa).

Disordered stretches follow at residues 1-69 and 88-337; these read MVRP…PPKK and LSVK…SQVR. Residues Ser-19 and Ser-23 each carry the phosphoserine modification. Residues 28 to 38 are compositionally biased toward polar residues; the sequence is ISSSTPVNKSK. An interaction with DNA region spans residues 32–50; it reads TPVNKSKTVPKVLKQDKPK. Positions 44–69 are enriched in basic and acidic residues; it reads LKQDKPKPNLKNLQKEEVLPTEPPKK. Residues Ser-103 and Ser-107 each carry the phosphoserine modification. Positions 105 to 118 are enriched in basic and acidic residues; that stretch reads EKSTDKQGKEKTEN. Positions 138–143 match the SIM motif motif; the sequence is LDKITE. Over residues 190–205 the composition is skewed to acidic residues; sequence SESDPDFDESKESDED. The interaction with DNA stretch occupies residues 225–286; sequence GEKKERKSKP…PSAESKRPKW (62 aa). Lys-251 participates in a covalent cross-link: Glycyl lysine isopeptide (Lys-Gly) (interchain with G-Cter in SUMO; alternate). Lys-251 is covalently cross-linked (Glycyl lysine isopeptide (Lys-Gly) (interchain with G-Cter in ubiquitin; alternate)). The WVPP motif signature appears at 286–289; the sequence is WVPP. The segment covering 290-304 has biased composition (low complexity); sequence AASGSRNSSSNALAG. The segment at 295-334 is interaction with RAD51; sequence RNSSSNALAGTPAKSPSQSLRLGLSRLAPVKRLHPSATSS. Ser-309 carries the phosphoserine modification.

In terms of assembly, monomer; elongated monodisperse monomer. Interacts (via C-terminal region) with RAD51; the interaction is direct. Interacts (via SIM motif) with WDR48/UAF1; WDR48/UAF1 and RAD51AP1 cooperate together to stimulate RAD51-mediated homologous recombination (HR). Interacts (via WVPP motif) with DMC1; the interaction is direct. Interacts with PALB2. Interacts with RAD52. In terms of processing, sumoylation with SUMO2/3 by NSMCE2/MMS21 promotes stabilization, possibly by preventing ubiquitination. As to expression, most abundantly expressed in testis. Also expressed in spleen, thymus and bone marrow. Not detected in heart, kidney or liver.

It is found in the chromosome. Its subcellular location is the nucleus. The protein resides in the telomere. In terms of biological role, structure-specific DNA-binding protein involved in DNA repair by promoting RAD51-mediated homologous recombination. Acts by stimulating D-Loop formation by RAD51: specifically enhances joint molecule formation through its structure-specific DNA interaction and its interaction with RAD51. Binds single-stranded DNA (ssDNA), double-stranded DNA (dsDNA) and secondary DNA structures, such as D-loop structures: has a strong preference for branched-DNA structures that are obligatory intermediates during joint molecule formation. Cooperates with WDR48/UAF1 to stimulate RAD51-mediated homologous recombination: both WDR48/UAF1 and RAD51AP1 have coordinated role in DNA-binding during homologous recombination and DNA repair. WDR48/UAF1 and RAD51AP1 also have a coordinated role in DNA-binding to promote USP1-mediated deubiquitination of FANCD2. Also involved in meiosis by promoting DMC1-mediated homologous meiotic recombination. The polypeptide is RAD51-associated protein 1 (Mus musculus (Mouse)).